The following is a 294-amino-acid chain: S-adenosylmethionine uptake transporter (294 aa).

A run of 10 helical transmembrane segments spans residues 4 to 24, 39 to 59, 74 to 91, 98 to 118, 121 to 141, 148 to 168, 177 to 197, 207 to 227, 237 to 257, and 260 to 280; these read ALKT…SSSA, FEVA…FVFY, ILRG…TYGL, TATV…VFFL, NIIW…VVTL, FNPE…LDII, SMIS…LPVA, FELA…FFLL, ATAP…YFIF, and FPDK…LFII. EamA domains follow at residues 21–141 and 160–280; these read SSSA…VVTL and ISFA…LFII.

Belongs to the drug/metabolite transporter (DMT) superfamily. 10 TMS drug/metabolite exporter (DME) (TC 2.A.7.3) family.

The protein resides in the cell inner membrane. Functionally, transports S-adenosylmethionine. The protein is S-adenosylmethionine uptake transporter (sam) of Rickettsia felis (strain ATCC VR-1525 / URRWXCal2) (Rickettsia azadi).